The sequence spans 442 residues: Transforming growth factor beta-2 proprotein (442 aa).

An N-terminal signal peptide occupies residues 1–20 (MHYCVLRTFLLLHLVPVALS). Residues Asn72, Asn168, and Asn269 are each glycosylated (N-linked (GlcNAc...) asparagine). Cystine bridges form between Cys337–Cys346, Cys345–Cys408, Cys374–Cys439, and Cys378–Cys441.

It belongs to the TGF-beta family. Interacts with the serine proteases, HTRA1 and HTRA3. Interacts with ASPN. Interacts with MFAP5. As to quaternary structure, interacts with Transforming growth factor beta-2 (TGF-beta-2) chain; interaction is non-covalent and maintains (TGF-beta-2) in a latent state. Interacts with LRRC32/GARP; leading to regulate activation of TGF-beta-2. Interacts with NREP; the interaction results in a decrease in TGFB2 autoinduction. In terms of assembly, transforming growth factor beta-2: Homodimer; disulfide-linked. Transforming growth factor beta-2: Interacts with TGF-beta receptors (TGFBR1 and TGFBR2), leading to signal transduction. In terms of processing, the precursor proprotein is cleaved in the Golgi apparatus to form Transforming growth factor beta-2 (TGF-beta-2) and Latency-associated peptide (LAP) chains, which remain non-covalently linked, rendering TGF-beta-2 inactive. Expressed in cardiomyocytes. In terms of tissue distribution, expressed in the aorta, primary bronchus, uterus, heart, skeletal muscle, sciatic nerve and spinal cord but not in the intestine.

The protein localises to the secreted. Its subcellular location is the extracellular space. It localises to the extracellular matrix. Its function is as follows. Precursor of the Latency-associated peptide (LAP) and Transforming growth factor beta-2 (TGF-beta-2) chains, which constitute the regulatory and active subunit of TGF-beta-2, respectively. Required to maintain the Transforming growth factor beta-2 (TGF-beta-2) chain in a latent state during storage in extracellular matrix. Associates non-covalently with TGF-beta-2 and regulates its activation via interaction with 'milieu molecules', such as LTBP1 and LRRC32/GARP, that control activation of TGF-beta-2. In terms of biological role, multifunctional protein that regulates various processes such as angiogenesis and heart development. Activation into mature form follows different steps: following cleavage of the proprotein in the Golgi apparatus, Latency-associated peptide (LAP) and Transforming growth factor beta-2 (TGF-beta-2) chains remain non-covalently linked rendering TGF-beta-2 inactive during storage in extracellular matrix. At the same time, LAP chain interacts with 'milieu molecules', such as LTBP1 and LRRC32/GARP, that control activation of TGF-beta-2 and maintain it in a latent state during storage in extracellular milieus. Once activated following release of LAP, TGF-beta-2 acts by binding to TGF-beta receptors (TGFBR1 and TGFBR2), which transduce signal. The chain is Transforming growth factor beta-2 proprotein (Tgfb2) from Rattus norvegicus (Rat).